Consider the following 298-residue polypeptide: MTDSHYIGRFAPSPSGELHFGSLIAALGSYLQARAQRGIWRVRIEDIDPPREVPGAAATILRQLEHYGLHWDGEVLWQSQRHEAYREALAWLHEQGLSYYCTCPRSRIQRLGGIYDGHCRTLCHGPENAAVRIKQQHPVMHFHDALRGDIQADPQLASEDFIIHRRDGLFAYNLAVVVDDHFQGVTEIVRGADLIEPTVRQLSLYKQFGWRAPGYVHLPLALNEQGAKLSKQNHAPALATGDPRPVLVQALRFLGQRDVVAWQEMSVEELLRFAVTHWRLTAVPTSANVNPAFSNASR.

L-glutamate-binding positions include 9-13 (RFAPS) and Glu-45. Positions 12-22 (PSPSGELHFGS) match the 'HIGH' region motif. Zn(2+) is bound by residues Cys-101, Cys-103, Tyr-115, and Cys-119. L-glutamate contacts are provided by Tyr-172 and Arg-190. The 'KMSKS' region motif lies at 228–232 (KLSKQ). Lys-231 is an ATP binding site.

It belongs to the class-I aminoacyl-tRNA synthetase family. GluQ subfamily. Zn(2+) serves as cofactor.

Its function is as follows. Catalyzes the tRNA-independent activation of glutamate in presence of ATP and the subsequent transfer of glutamate onto a tRNA(Asp). Glutamate is transferred on the 2-amino-5-(4,5-dihydroxy-2-cyclopenten-1-yl) moiety of the queuosine in the wobble position of the QUC anticodon. This chain is Glutamyl-Q tRNA(Asp) synthetase, found in Salmonella paratyphi A (strain ATCC 9150 / SARB42).